Reading from the N-terminus, the 120-residue chain is uncharacterized protein (120 aa).

3 helical membrane passes run 20-39, 52-71, and 86-108; these read FFWP…CYLL, GSSL…LFSI, and ILVV…SIIG.

Its subcellular location is the cell membrane. This is an uncharacterized protein from Pasteurella multocida (strain Pm70).